The sequence spans 205 residues: MASASTTWSMSCLKSALPSIQPISSSSLRFSCGPSPSRLRICKPKSSSRLLHSFVGLAPLHPLLSLSSQDSTSFEHSFTVIDNGGRVFAMRHGRKVPKLNRPPDQRRALLRGLTTQLLKHGRIKTTKARARAVRKYVDKMITMAKDGSLHKRRQALGFIYEKQIVHALFAEVPDRYGERNGGYTRIIRTLPRRGDNAPMAYIELV.

A chloroplast-targeting transit peptide spans 1–89; sequence MASASTTWSM…VIDNGGRVFA (89 aa).

It belongs to the bacterial ribosomal protein bL17 family. Part of the 50S ribosomal subunit.

The protein resides in the plastid. Its subcellular location is the chloroplast. Its function is as follows. This protein binds directly to 23S ribosomal RNA. This chain is Large ribosomal subunit protein bL17c (RPL17), found in Nicotiana tabacum (Common tobacco).